A 132-amino-acid polypeptide reads, in one-letter code: MGRDTIADILTSIRNANMDKKGTVRIASTNITENIVKILLREGFIENVRKHQENNKYFLVSTLQHRRNRKGRYRTILKRISRPGLRIYSNYQRIPRILGGMGIVILSTSQGIMTDREARLEGIGGEILCYIW.

This sequence belongs to the universal ribosomal protein uS8 family. Part of the 30S ribosomal subunit.

The protein localises to the plastid. Its subcellular location is the chloroplast. In terms of biological role, one of the primary rRNA binding proteins, it binds directly to 16S rRNA central domain where it helps coordinate assembly of the platform of the 30S subunit. This chain is Small ribosomal subunit protein uS8c (rps8), found in Calycanthus floridus var. glaucus (Eastern sweetshrub).